The primary structure comprises 360 residues: Membrane-bound lytic murein transglycosylase C (360 aa).

Residues 1–16 form the signal peptide; that stretch reads MKKLLALAVIAPLLIS. Residue Cys17 is the site of N-palmitoyl cysteine attachment. Cys17 carries S-diacylglycerol cysteine lipidation.

The protein belongs to the transglycosylase Slt family.

The protein localises to the cell outer membrane. It carries out the reaction Exolytic cleavage of the (1-&gt;4)-beta-glycosidic linkage between N-acetylmuramic acid (MurNAc) and N-acetylglucosamine (GlcNAc) residues in peptidoglycan, from either the reducing or the non-reducing ends of the peptidoglycan chains, with concomitant formation of a 1,6-anhydrobond in the MurNAc residue.. In terms of biological role, murein-degrading enzyme. May play a role in recycling of muropeptides during cell elongation and/or cell division. The chain is Membrane-bound lytic murein transglycosylase C from Salmonella paratyphi A (strain ATCC 9150 / SARB42).